The primary structure comprises 327 residues: Phenylalanine--tRNA ligase alpha subunit (327 aa).

Glu-252 is a binding site for Mg(2+).

This sequence belongs to the class-II aminoacyl-tRNA synthetase family. Phe-tRNA synthetase alpha subunit type 1 subfamily. As to quaternary structure, tetramer of two alpha and two beta subunits. It depends on Mg(2+) as a cofactor.

Its subcellular location is the cytoplasm. It catalyses the reaction tRNA(Phe) + L-phenylalanine + ATP = L-phenylalanyl-tRNA(Phe) + AMP + diphosphate + H(+). The chain is Phenylalanine--tRNA ligase alpha subunit from Shewanella putrefaciens (strain CN-32 / ATCC BAA-453).